We begin with the raw amino-acid sequence, 500 residues long: GTPase Der (500 aa).

EngA-type G domains follow at residues P3–L166 and I211–T384. GTP-binding positions include G9 to S16, D56 to I60, N118 to D121, G217 to S224, D264 to V268, and N329 to D332. A KH-like domain is found at K385–E469. Residues L481–K500 are disordered. The span at Q486 to K500 shows a compositional bias: basic residues.

This sequence belongs to the TRAFAC class TrmE-Era-EngA-EngB-Septin-like GTPase superfamily. EngA (Der) GTPase family. In terms of assembly, associates with the 50S ribosomal subunit.

Functionally, GTPase that plays an essential role in the late steps of ribosome biogenesis. This Aliivibrio salmonicida (strain LFI1238) (Vibrio salmonicida (strain LFI1238)) protein is GTPase Der.